Here is a 524-residue protein sequence, read N- to C-terminus: Serine/threonine-protein kinase PAK 2 (524 aa).

Residues 1 to 81 (MSDNGELEDK…PEISPPSDFE (81 aa)) form a disordered region. S2 bears the N-acetylserine mark. 4 positions are modified to phosphoserine: S2, S20, S55, and S58. The residue at position 60 (T60) is a Phosphothreonine. An N6-acetyllysine modification is found at K62. S64 carries the phosphoserine modification. Over residues 67-81 (KEKERPEISPPSDFE) the composition is skewed to basic and acidic residues. The segment at 69–112 (KERPEISPPSDFEHTIHVGFDAVTGEFTGMPEQWARLLQTSNIT) is GTPase-binding. An autoregulatory region region spans residues 69 to 137 (KERPEISPPS…KFYDSNTVKQ (69 aa)). Residues 74-87 (ISPPSDFEHTIHVG) enclose the CRIB domain. K128 is subject to N6-acetyllysine. Residue T134 is modified to Phosphothreonine. Residue Y139 is modified to Phosphotyrosine. Position 141 is a phosphoserine (S141). The tract at residues 142-188 (FTPPEKDGFPSGTPALNTKGSETSAVVTEEDDDDEDAAPPVIAPRPD) is disordered. A Phosphothreonine modification is found at T143. S152 is subject to Phosphoserine. A phosphothreonine mark is found at T154, T159, and T169. The span at 155–167 (PALNTKGSETSAV) shows a compositional bias: polar residues. The span at 169–178 (TEEDDDDEDA) shows a compositional bias: acidic residues. S197 carries the phosphoserine modification. The disordered stretch occupies residues 204-228 (APVGDSNVDSGAKSSDKQKKKAKMT). The Nuclear localization signal signature appears at 245-251 (PKKKYTR). The Protein kinase domain occupies 249–499 (YTRYEKIGQG…SAKELLQHPF (251 aa)). Residues 255-263 (IGQGASGTV) and K278 contribute to the ATP site. R367 acts as the Proton acceptor in catalysis. T402 is subject to Phosphothreonine; by autocatalysis.

The protein belongs to the protein kinase superfamily. STE Ser/Thr protein kinase family. STE20 subfamily. Interacts tightly with GTP-bound but not GDP-bound CDC42/p21 and RAC1. Interacts with SH3MD4. Interacts with SCRIB. Interacts with ARHGEF7 and GIT1. PAK-2p34 interacts with ARHGAP10. Interacts with RAC1. Post-translationally, full-length PAK2 is autophosphorylated when activated by CDC42/p21. Following cleavage, both peptides, PAK-2p27 and PAK-2p34, become highly autophosphorylated. Autophosphorylation of PAK-2p27 can occur in the absence of any effectors and is dependent on phosphorylation of Thr-402, because PAK-2p27 is acting as an exogenous substrate. In terms of processing, during apoptosis proteolytically cleaved by caspase-3 or caspase-3-like proteases to yield active PAK-2p34. Ubiquitinated, leading to its proteasomal degradation.

It is found in the cytoplasm. The protein localises to the nucleus. Its subcellular location is the perinuclear region. The protein resides in the membrane. The catalysed reaction is L-seryl-[protein] + ATP = O-phospho-L-seryl-[protein] + ADP + H(+). The enzyme catalyses L-threonyl-[protein] + ATP = O-phospho-L-threonyl-[protein] + ADP + H(+). Activated by binding small G proteins. Binding of GTP-bound CDC42 or RAC1 to the autoregulatory region releases monomers from the autoinhibited dimer, enables phosphorylation of Thr-402 and allows the kinase domain to adopt an active structure. Following caspase cleavage, autophosphorylated PAK-2p34 is constitutively active. In terms of biological role, serine/threonine protein kinase that plays a role in a variety of different signaling pathways including cytoskeleton regulation, cell motility, cell cycle progression, apoptosis or proliferation. Acts as a downstream effector of the small GTPases CDC42 and RAC1. Activation by the binding of active CDC42 and RAC1 results in a conformational change and a subsequent autophosphorylation on several serine and/or threonine residues. Full-length PAK2 stimulates cell survival and cell growth. Phosphorylates MAPK4 and MAPK6 and activates the downstream target MAPKAPK5, a regulator of F-actin polymerization and cell migration. Phosphorylates JUN and plays an important role in EGF-induced cell proliferation. Phosphorylates many other substrates including histone H4 to promote assembly of H3.3 and H4 into nucleosomes, BAD, ribosomal protein S6, or MBP. Phosphorylates CASP7, thereby preventing its activity. Additionally, associates with ARHGEF7 and GIT1 to perform kinase-independent functions such as spindle orientation control during mitosis. On the other hand, apoptotic stimuli such as DNA damage lead to caspase-mediated cleavage of PAK2, generating PAK-2p34, an active p34 fragment that translocates to the nucleus and promotes cellular apoptosis involving the JNK signaling pathway. Caspase-activated PAK2 phosphorylates MKNK1 and reduces cellular translation. The sequence is that of Serine/threonine-protein kinase PAK 2 (Pak2) from Mus musculus (Mouse).